Consider the following 358-residue polypeptide: U5 small nuclear ribonucleoprotein 40 kDa protein (358 aa).

Lys-18 participates in a covalent cross-link: Glycyl lysine isopeptide (Lys-Gly) (interchain with G-Cter in SUMO2). Arg-21 is subject to Asymmetric dimethylarginine. WD repeat units follow at residues Gly-65 to Ala-104, Gly-108 to Arg-147, Gly-150 to Thr-190, Gln-192 to Thr-231, Gly-234 to Arg-273, Asn-284 to Lys-323, and Gly-326 to Gln-358. Lys-271 is covalently cross-linked (Glycyl lysine isopeptide (Lys-Gly) (interchain with G-Cter in SUMO2)).

Component of the pre-catalytic and catalytic spliceosome complexes. Component of the postcatalytic spliceosome P complex. Part of the U5 snRNP complex. Interacts with PRPF8. Component of the U4/U6-U5 tri-snRNP complex composed of the U4, U6 and U5 snRNAs and at least PRPF3, PRPF4, PRPF6, PRPF8, PRPF31, SNRNP200, TXNL4A, WDR57, SNRNP40, DDX23, CD2BP2, PPIH, SNU13, EFTUD2, SART1 and USP39. Component of the minor spliceosome, which splices U12-type introns.

The protein localises to the nucleus. Its function is as follows. Required for pre-mRNA splicing as component of the activated spliceosome. Component of the U5 small nuclear ribonucleoprotein (snRNP) complex and the U4/U6-U5 tri-snRNP complex, building blocks of the spliceosome. As a component of the minor spliceosome, involved in the splicing of U12-type introns in pre-mRNAs. In Bos taurus (Bovine), this protein is U5 small nuclear ribonucleoprotein 40 kDa protein (SNRNP40).